A 167-amino-acid chain; its full sequence is HVA22-like protein b (167 aa).

The next 3 helical transmembrane spans lie at valine 18 to glutamate 38, glutamine 47 to arginine 67, and leucine 68 to leucine 88.

Belongs to the DP1 family. In terms of tissue distribution, predominantly expressed in flower buds.

The protein resides in the membrane. This Arabidopsis thaliana (Mouse-ear cress) protein is HVA22-like protein b (HVA22B).